The primary structure comprises 695 residues: F-box only protein 34 (695 aa).

Disordered regions lie at residues 239 to 275 (GQSRGIPPAPEPFSAPETCEEPKEQENPETGRSQGEP), 316 to 373 (LTNG…CPSL), and 472 to 524 (GQDQ…PGGS). In terms of domain architecture, F-box spans 556–608 (QQYMACLPHHIIVKIFRLLPTLSLAILKCTCRYFKSIIEYYNIRPADSRWVRD).

As to quaternary structure, directly interacts with SKP1 and CUL1.

In terms of biological role, substrate-recognition component of the SCF (SKP1-CUL1-F-box protein)-type E3 ubiquitin ligase complex. The polypeptide is F-box only protein 34 (Fbxo34) (Mus musculus (Mouse)).